Reading from the N-terminus, the 254-residue chain is Geranylgeranylglyceryl phosphate synthase (254 aa).

Mg(2+) contacts are provided by Asp-27 and Ser-56. Residues 174-180, 212-213, and 234-235 contribute to the sn-glycerol 1-phosphate site; these read YLEAGSG, GG, and GT.

This sequence belongs to the GGGP/HepGP synthase family. Group II subfamily. Homohexamer. Mg(2+) serves as cofactor.

It is found in the cytoplasm. The enzyme catalyses sn-glycerol 1-phosphate + (2E,6E,10E)-geranylgeranyl diphosphate = sn-3-O-(geranylgeranyl)glycerol 1-phosphate + diphosphate. Its pathway is membrane lipid metabolism; glycerophospholipid metabolism. Functionally, prenyltransferase that catalyzes the transfer of the geranylgeranyl moiety of geranylgeranyl diphosphate (GGPP) to the C3 hydroxyl of sn-glycerol-1-phosphate (G1P). This reaction is the first ether-bond-formation step in the biosynthesis of archaeal membrane lipids. The chain is Geranylgeranylglyceryl phosphate synthase from Aeropyrum pernix (strain ATCC 700893 / DSM 11879 / JCM 9820 / NBRC 100138 / K1).